We begin with the raw amino-acid sequence, 149 residues long: uncharacterized protein (149 aa).

This is an uncharacterized protein from Acidithiobacillus ferridurans.